Reading from the N-terminus, the 496-residue chain is Glutamate--tRNA ligase 2 (496 aa).

Positions 13-23 (PSPTGRLHVGG) match the 'HIGH' region motif. Residues 255-259 (KLSKR) carry the 'KMSKS' region motif. Lysine 258 contacts ATP.

The protein belongs to the class-I aminoacyl-tRNA synthetase family. Glutamate--tRNA ligase type 1 subfamily. As to quaternary structure, monomer.

The protein localises to the cytoplasm. The enzyme catalyses tRNA(Glu) + L-glutamate + ATP = L-glutamyl-tRNA(Glu) + AMP + diphosphate. Its function is as follows. Catalyzes the attachment of glutamate to tRNA(Glu) in a two-step reaction: glutamate is first activated by ATP to form Glu-AMP and then transferred to the acceptor end of tRNA(Glu). This is Glutamate--tRNA ligase 2 from Rubrobacter xylanophilus (strain DSM 9941 / JCM 11954 / NBRC 16129 / PRD-1).